The primary structure comprises 443 residues: Glutamate--tRNA ligase 1 (443 aa).

A 'HIGH' region motif is present at residues 8–18 (PSPTGRLHVGN). The 'KMSKS' region signature appears at 239 to 243 (KLSKR). Lysine 242 lines the ATP pocket.

It belongs to the class-I aminoacyl-tRNA synthetase family. Glutamate--tRNA ligase type 1 subfamily. As to quaternary structure, monomer.

It localises to the cytoplasm. The catalysed reaction is tRNA(Glu) + L-glutamate + ATP = L-glutamyl-tRNA(Glu) + AMP + diphosphate. In terms of biological role, catalyzes the attachment of glutamate to tRNA(Glu) in a two-step reaction: glutamate is first activated by ATP to form Glu-AMP and then transferred to the acceptor end of tRNA(Glu). This is Glutamate--tRNA ligase 1 from Rhizorhabdus wittichii (strain DSM 6014 / CCUG 31198 / JCM 15750 / NBRC 105917 / EY 4224 / RW1) (Sphingomonas wittichii).